The sequence spans 334 residues: G-protein coupled receptor 12 (334 aa).

At 1–48 the chain is on the extracellular side; that stretch reads MNEDPKVNLSGLPRDCIDAGAPENISAAVPSQGSVAESEPELVVNPWD. N-linked (GlcNAc...) asparagine glycans are attached at residues N8 and N24. A helical membrane pass occupies residues 49-69; the sequence is IVLCSSGTLICCENAVVVLII. The Cytoplasmic segment spans residues 70–78; the sequence is FHSPSLRAP. A helical transmembrane segment spans residues 79–99; that stretch reads MFLLIGSLALADLLAGLGLII. Residues 100-113 are Extracellular-facing; it reads NFVFAYLLQSEATK. A helical membrane pass occupies residues 114–134; sequence LVTIGLIVASFSASVCSLLAI. Topologically, residues 135–158 are cytoplasmic; the sequence is TVDRYLSLYYALTYHSERTVTFTY. The helical transmembrane segment at 159-179 threads the bilayer; sequence VMLVMLWGTSICLGLLPVMGW. Topologically, residues 180 to 199 are extracellular; it reads NCLRDESTCSVVRPLTKNNA. Residues 200 to 220 traverse the membrane as a helical segment; the sequence is AILSISFLFMFALMLQLYIQI. Topologically, residues 221 to 252 are cytoplasmic; sequence CKIVMRHAHQIALQHHFLATSHYVTTRKGVST. The helical transmembrane segment at 253 to 273 threads the bilayer; it reads LALILGTFAACWMPFTLYSLI. Residues 274 to 282 lie on the Extracellular side of the membrane; it reads ADYTYPSIY. The chain crosses the membrane as a helical span at residues 283 to 303; the sequence is TYATLLPATYNSIINPVIYAF. At 304-334 the chain is on the cytoplasmic side; it reads RNQEIQKALCLICCGCIPSSLSQRARSPSDV. C317 is lipidated: S-palmitoyl cysteine. Residues S330 and S332 each carry the phosphoserine modification.

This sequence belongs to the G-protein coupled receptor 1 family. As to expression, expressed predominantly in the forebrain and a lesser extent in the hindbrain. Lower expression in the liver.

It localises to the cell membrane. In terms of biological role, receptor with constitutive G(s) signaling activity that stimulates cyclic AMP production. Promotes neurite outgrowth and blocks myelin inhibition in neurons. The chain is G-protein coupled receptor 12 (Gpr12) from Mus musculus (Mouse).